Consider the following 208-residue polypeptide: MVFDELITEFDRGLRSIAGVSRMSRPVPKPAAAAPAELSAAERKHAAGLMRVNHVGEVCAQALYQAQKLTTSSAGLKEMFEHAAREEEDHLAWTAHRLKDLDSRPSLLNPLWYAGALAIGVVAGRLGDKVSLGFMAETERQVESHLDGHLSELPAADVESRAIVEQMRADEVKHGKSATDAGGIELPMPARMLMRAASKVMTSTAYYL.

Residues glutamate 57, glutamate 87, histidine 90, glutamate 139, glutamate 171, and histidine 174 each coordinate Fe cation.

The protein belongs to the COQ7 family. It depends on Fe cation as a cofactor.

It localises to the cell membrane. The enzyme catalyses a 5-methoxy-2-methyl-3-(all-trans-polyprenyl)benzene-1,4-diol + AH2 + O2 = a 3-demethylubiquinol + A + H2O. The protein operates within cofactor biosynthesis; ubiquinone biosynthesis. Catalyzes the hydroxylation of 2-nonaprenyl-3-methyl-6-methoxy-1,4-benzoquinol during ubiquinone biosynthesis. This chain is 3-demethoxyubiquinol 3-hydroxylase, found in Burkholderia pseudomallei (strain 668).